A 294-amino-acid chain; its full sequence is Cytidine deaminase (294 aa).

CMP/dCMP-type deaminase domains lie at 48 to 168 (DEDA…FGPK) and 186 to 294 (LTGD…VLLG). 89-91 (NME) lines the substrate pocket. H102 is a binding site for Zn(2+). The active-site Proton donor is E104. Zn(2+) is bound by residues C129 and C132.

It belongs to the cytidine and deoxycytidylate deaminase family. In terms of assembly, homodimer. The cofactor is Zn(2+).

It carries out the reaction cytidine + H2O + H(+) = uridine + NH4(+). It catalyses the reaction 2'-deoxycytidine + H2O + H(+) = 2'-deoxyuridine + NH4(+). Its function is as follows. This enzyme scavenges exogenous and endogenous cytidine and 2'-deoxycytidine for UMP synthesis. This is Cytidine deaminase from Salmonella newport (strain SL254).